Reading from the N-terminus, the 308-residue chain is D-alanine--D-alanine ligase (308 aa).

Residues 102–302 form the ATP-grasp domain; sequence KHVAKAAGIP…FGEFLRWMVE (201 aa). Position 128 to 183 (128 to 183) interacts with ATP; that stretch reads PMKPPYVVKPVREGSSFGVVIVKEDQSHPPQVITSSDWRYGDRIMVERYVAGREFT. The Mg(2+) site is built by Asp-252, Glu-269, and Asn-271.

Belongs to the D-alanine--D-alanine ligase family. Requires Mg(2+) as cofactor. The cofactor is Mn(2+).

It is found in the cytoplasm. The enzyme catalyses 2 D-alanine + ATP = D-alanyl-D-alanine + ADP + phosphate + H(+). The protein operates within cell wall biogenesis; peptidoglycan biosynthesis. Functionally, cell wall formation. This Sinorhizobium medicae (strain WSM419) (Ensifer medicae) protein is D-alanine--D-alanine ligase.